The following is a 511-amino-acid chain: Probable mannosyl-oligosaccharide alpha-1,2-mannosidase 1B (511 aa).

A signal peptide spans 1 to 18 (MHLPSLSLAWALAGSSLA). N-linked (GlcNAc...) asparagine glycans are attached at residues asparagine 90 and asparagine 177. Residues cysteine 327 and cysteine 356 are joined by a disulfide bond. Glutamate 370 acts as the Proton donor in catalysis. The N-linked (GlcNAc...) asparagine glycan is linked to asparagine 433. Position 501 (threonine 501) interacts with Ca(2+).

Belongs to the glycosyl hydrolase 47 family. In terms of assembly, monomer. Requires Ca(2+) as cofactor. Mg(2+) is required as a cofactor.

It localises to the cytoplasmic vesicle lumen. It catalyses the reaction N(4)-(alpha-D-Man-(1-&gt;2)-alpha-D-Man-(1-&gt;2)-alpha-D-Man-(1-&gt;3)-[alpha-D-Man-(1-&gt;2)-alpha-D-Man-(1-&gt;3)-[alpha-D-Man-(1-&gt;2)-alpha-D-Man-(1-&gt;6)]-alpha-D-Man-(1-&gt;6)]-beta-D-Man-(1-&gt;4)-beta-D-GlcNAc-(1-&gt;4)-beta-D-GlcNAc)-L-asparaginyl-[protein] (N-glucan mannose isomer 9A1,2,3B1,2,3) + 4 H2O = N(4)-(alpha-D-Man-(1-&gt;3)-[alpha-D-Man-(1-&gt;3)-[alpha-D-Man-(1-&gt;6)]-alpha-D-Man-(1-&gt;6)]-beta-D-Man-(1-&gt;4)-beta-D-GlcNAc-(1-&gt;4)-beta-D-GlcNAc)-L-asparaginyl-[protein] (N-glucan mannose isomer 5A1,2) + 4 beta-D-mannose. The enzyme catalyses N(4)-(alpha-D-Man-(1-&gt;2)-alpha-D-Man-(1-&gt;2)-alpha-D-Man-(1-&gt;3)-[alpha-D-Man-(1-&gt;3)-[alpha-D-Man-(1-&gt;2)-alpha-D-Man-(1-&gt;6)]-alpha-D-Man-(1-&gt;6)]-beta-D-Man-(1-&gt;4)-beta-D-GlcNAc-(1-&gt;4)-beta-D-GlcNAc)-L-asparaginyl-[protein] (N-glucan mannose isomer 8A1,2,3B1,3) + 3 H2O = N(4)-(alpha-D-Man-(1-&gt;3)-[alpha-D-Man-(1-&gt;3)-[alpha-D-Man-(1-&gt;6)]-alpha-D-Man-(1-&gt;6)]-beta-D-Man-(1-&gt;4)-beta-D-GlcNAc-(1-&gt;4)-beta-D-GlcNAc)-L-asparaginyl-[protein] (N-glucan mannose isomer 5A1,2) + 3 beta-D-mannose. It functions in the pathway protein modification; protein glycosylation. In terms of biological role, involved in the maturation of Asn-linked oligosaccharides. Progressively trims alpha-1,2-linked mannose residues from Man(9)GlcNAc(2) to produce Man(5)GlcNAc(2). The polypeptide is Probable mannosyl-oligosaccharide alpha-1,2-mannosidase 1B (mns1B) (Aspergillus clavatus (strain ATCC 1007 / CBS 513.65 / DSM 816 / NCTC 3887 / NRRL 1 / QM 1276 / 107)).